Reading from the N-terminus, the 74-residue chain is Peptide Im-4 (74 aa).

Positions 1 to 22 (MKFQYLLAIFMIVLVVTDHCQA) are cleaved as a signal peptide. K39 bears the Lysine amide; partial mark. Residues 40–74 (GRRRRQLEARYEPQQRNFRKREIDFEKLFANMPDY) constitute a propeptide that is removed on maturation.

This sequence belongs to the non-disulfide-bridged peptide (NDBP) superfamily. Short antimicrobial peptide (group 4) family. As to expression, expressed by the venom gland.

The protein resides in the secreted. The protein localises to the target cell membrane. Antimicrobial peptide that probably forms pores in target membranes. Has antibacterial activity against Gram-positive bacteria S.aureus NBRC 13276 (MIC=5-10 uM) and B.subtilis NBRC 3009 (MIC=2.5-5 uM) but not against Gram-negative bacterium E.coli NBRC 3972. In Isometrus maculatus (Lesser brown scorpion), this protein is Peptide Im-4.